The primary structure comprises 172 residues: RNA pyrophosphohydrolase (172 aa).

The Nudix hydrolase domain occupies 6–149 (GYRLNVGIVI…KRDVYRRAMK (144 aa)). The short motif at 38–59 (GGIDDGESPEQAMFRELYEEVG) is the Nudix box element.

It belongs to the Nudix hydrolase family. RppH subfamily. Requires a divalent metal cation as cofactor.

Its function is as follows. Accelerates the degradation of transcripts by removing pyrophosphate from the 5'-end of triphosphorylated RNA, leading to a more labile monophosphorylated state that can stimulate subsequent ribonuclease cleavage. This chain is RNA pyrophosphohydrolase, found in Vibrio cholerae serotype O1 (strain ATCC 39315 / El Tor Inaba N16961).